Here is a 514-residue protein sequence, read N- to C-terminus: Coiled-coil domain-containing protein 174 (514 aa).

2 disordered regions span residues Ala42–Arg83 and Thr137–Glu162. The segment covering Lys63–Arg83 has biased composition (basic and acidic residues). Residues Glu66–Lys98 are a coiled coil. Acidic residues predominate over residues Glu141–Glu162. Coiled-coil stretches lie at residues Leu203–Lys227 and Leu266–Gly321. Disordered regions lie at residues Arg270 to Leu291 and Leu306 to His490. Composition is skewed to basic and acidic residues over residues Glu335–Lys354 and Lys376–Glu388. Positions Tyr405–Gly418 are enriched in polar residues. A compositionally biased stretch (basic and acidic residues) spans Thr420–Lys429.

The protein resides in the nucleus. Functionally, probably involved in neuronal development. The polypeptide is Coiled-coil domain-containing protein 174 (CCDC174) (Gallus gallus (Chicken)).